Here is a 230-residue protein sequence, read N- to C-terminus: Cytidylate kinase (230 aa).

12–20 (GPSGAGKGT) contributes to the ATP binding site.

The protein belongs to the cytidylate kinase family. Type 1 subfamily.

The protein resides in the cytoplasm. The enzyme catalyses CMP + ATP = CDP + ADP. It carries out the reaction dCMP + ATP = dCDP + ADP. The polypeptide is Cytidylate kinase (Shewanella sp. (strain W3-18-1)).